The primary structure comprises 866 residues: Dimethylglycine dehydrogenase, mitochondrial (866 aa).

A mitochondrion-targeting transit peptide spans 1 to 50 (MLRPGAQLLRGLLLRSCPLQGSPGRPRSVCGREGEEKPPLSAETQWKDRA). The tract at residues 20–42 (QGSPGRPRSVCGREGEEKPPLSA) is disordered. Residues 59–60 (CV), 80–81 (EK), and 87–95 (GSTWHAAGL) contribute to the FAD site. His-91 bears the Tele-8alpha-FAD histidine mark. The residue at position 114 (Lys-114) is an N6-acetyllysine. Position 148 is an N6-acetyllysine; alternate (Lys-148). Position 148 is an N6-succinyllysine; alternate (Lys-148). Lys-168 bears the N6-acetyllysine mark. Val-219 is an FAD binding site. N6-acetyllysine is present on Lys-223. Trp-251 is an FAD binding site. Residues Lys-317 and Lys-319 each carry the N6-succinyllysine modification. N6-acetyllysine is present on residues Lys-335 and Lys-360. FAD is bound at residue 397–402 (FGYGII). Residues Lys-434 and Lys-523 each carry the N6-acetyllysine; alternate modification. Residues Lys-434 and Lys-523 each carry the N6-succinyllysine; alternate modification. 580–582 (ELT) contacts (6S)-5,6,7,8-tetrahydrofolate. Lys-655 is modified (N6-acetyllysine; alternate). Residue Lys-655 is modified to N6-succinyllysine; alternate. (6S)-5,6,7,8-tetrahydrofolate contacts are provided by residues Tyr-676, 683-685 (ELY), and Tyr-744. The residue at position 764 (Lys-764) is an N6-acetyllysine. N6-succinyllysine is present on Lys-795.

This sequence belongs to the GcvT family. In terms of assembly, monomer. Requires FAD as cofactor.

The protein localises to the mitochondrion. It catalyses the reaction (6S)-5,6,7,8-tetrahydrofolyl-(gamma-L-Glu)(n) + N,N-dimethylglycine + oxidized [electron-transfer flavoprotein] + H(+) = (6R)-5,10-methylenetetrahydrofolyl-(gamma-L-Glu)(n) + sarcosine + reduced [electron-transfer flavoprotein]. The protein operates within amine and polyamine degradation; betaine degradation; sarcosine from betaine: step 2/2. In terms of biological role, catalyzes the demethylation of N,N-dimethylglycine to sarcosine. Also has activity with sarcosine in vitro. This Homo sapiens (Human) protein is Dimethylglycine dehydrogenase, mitochondrial (DMGDH).